Here is a 370-residue protein sequence, read N- to C-terminus: Nucleoprotein (370 aa).

Residues 1–25 (MPPKRRLVDDADAMEDQDLYEPPAS) form a disordered region. The Nuclear localization signal signature appears at 3-11 (PKRRLVDDA). The span at 10-19 (DADAMEDQDL) shows a compositional bias: acidic residues. A Nuclear export signal motif is present at residues 128–141 (LTELEISSIFSHCC).

As to quaternary structure, homomultimerizes to form the nucleocapsid. Binds to viral genomic RNA. Interacts with phosphoprotein P. Interacts with host CDK1; this interaction delays host cell cycle in late G2. Interacts with host NFKB1.

It localises to the virion. It is found in the host nucleus. The protein localises to the host cytoplasm. Its function is as follows. Encapsidates the genome, protecting it from nucleases. The encapsidated genomic RNA is termed the NC and serves as template for transcription and replication. Plays a critical role in the nucleocytoplasmic transport of viral RNP by interaction with other viral proteins. The nuclear export signal is masked by the interaction with the phosphoprotein P. Delays the host cell cycle progression by interacting with the host CDK1-cyclin B1 phase in late G2. Inhibits host NF-kappaB activation. This is Nucleoprotein (N) from Borna disease virus (strain V) (BDV).